Here is a 401-residue protein sequence, read N- to C-terminus: 1-deoxy-D-xylulose 5-phosphate reductoisomerase (401 aa).

The NADPH site is built by Thr-11, Gly-12, Ser-13, Ile-14, Arg-38, Asn-39, and Asn-125. Residue Lys-126 participates in 1-deoxy-D-xylulose 5-phosphate binding. Glu-127 is an NADPH binding site. Asp-151 contributes to the Mn(2+) binding site. Residues Ser-152, Glu-153, Ser-179, and His-202 each coordinate 1-deoxy-D-xylulose 5-phosphate. Glu-153 lines the Mn(2+) pocket. Gly-208 contacts NADPH. Ser-215, Asn-220, Lys-221, and Glu-224 together coordinate 1-deoxy-D-xylulose 5-phosphate. Glu-224 provides a ligand contact to Mn(2+).

This sequence belongs to the DXR family. Mg(2+) is required as a cofactor. The cofactor is Mn(2+).

The enzyme catalyses 2-C-methyl-D-erythritol 4-phosphate + NADP(+) = 1-deoxy-D-xylulose 5-phosphate + NADPH + H(+). It functions in the pathway isoprenoid biosynthesis; isopentenyl diphosphate biosynthesis via DXP pathway; isopentenyl diphosphate from 1-deoxy-D-xylulose 5-phosphate: step 1/6. Catalyzes the NADPH-dependent rearrangement and reduction of 1-deoxy-D-xylulose-5-phosphate (DXP) to 2-C-methyl-D-erythritol 4-phosphate (MEP). The sequence is that of 1-deoxy-D-xylulose 5-phosphate reductoisomerase from Paraburkholderia phymatum (strain DSM 17167 / CIP 108236 / LMG 21445 / STM815) (Burkholderia phymatum).